The sequence spans 289 residues: 4-diphosphocytidyl-2-C-methyl-D-erythritol kinase (289 aa).

Lys16 is an active-site residue. 99 to 109 contacts ATP; the sequence is PMGGGLGGGSS. Residue Asp141 is part of the active site.

It belongs to the GHMP kinase family. IspE subfamily.

It catalyses the reaction 4-CDP-2-C-methyl-D-erythritol + ATP = 4-CDP-2-C-methyl-D-erythritol 2-phosphate + ADP + H(+). It participates in isoprenoid biosynthesis; isopentenyl diphosphate biosynthesis via DXP pathway; isopentenyl diphosphate from 1-deoxy-D-xylulose 5-phosphate: step 3/6. Catalyzes the phosphorylation of the position 2 hydroxy group of 4-diphosphocytidyl-2C-methyl-D-erythritol. This chain is 4-diphosphocytidyl-2-C-methyl-D-erythritol kinase, found in Ralstonia pickettii (strain 12J).